The sequence spans 510 residues: Protein ERGIC-53 (510 aa).

A signal peptide spans 1-30; sequence MAGSRQRGLRARVRPLFCALLLSLGRFVRG. Residues 31 to 477 lie on the Lumenal side of the membrane; sequence DGVGGDPAVA…ELPPFPSCLS (447 aa). The L-type lectin-like domain occupies 44-267; it reads RRFEYKYSFK…DVLSFLTFQL (224 aa). A carbohydrate is bound by residues serine 88 and aspartate 121. Ca(2+) contacts are provided by aspartate 152, phenylalanine 154, and asparagine 156. A carbohydrate is bound by residues asparagine 156 and histidine 178. Residue aspartate 181 participates in Ca(2+) binding. A disulfide bridge connects residues cysteine 190 and cysteine 230. A carbohydrate is bound at residue 251–253; it reads GGL. Serine 425 is modified (phosphoserine). The chain crosses the membrane as a helical span at residues 478–498; that stretch reads TVHFIIFVVVQTVLFIGYIMY. Residues 499–510 lie on the Cytoplasmic side of the membrane; it reads RSQQEAAAKKFF. Residues 499–510 form a mediates interaction with RAB3GAP1, RAB3GAP2 and UBXN6 region; that stretch reads RSQQEAAAKKFF. The ER export motif motif lies at 509 to 510; the sequence is FF.

In terms of assembly, exists both as a covalent disulfide-linked homohexamer, and a complex of three disulfide-linked dimers non-covalently kept together. Interacts with MCFD2. May interact with TMEM115. Interacts with RAB3GAP1 and RAB3GAP2. Interacts with UBXN6. Interacts with SERPINA1/alpha1-antitrypsin. Interacts with BET1. In terms of processing, the N-terminal may be partly blocked. As to expression, ubiquitous.

It is found in the endoplasmic reticulum-Golgi intermediate compartment membrane. It localises to the golgi apparatus membrane. The protein localises to the endoplasmic reticulum membrane. Functionally, mannose-specific lectin. May recognize sugar residues of glycoproteins, glycolipids, or glycosylphosphatidyl inositol anchors and may be involved in the sorting or recycling of proteins, lipids, or both. The LMAN1-MCFD2 complex forms a specific cargo receptor for the ER-to-Golgi transport of selected proteins. The polypeptide is Protein ERGIC-53 (LMAN1) (Homo sapiens (Human)).